The following is a 423-amino-acid chain: MLRVRCLRGGSRGAEAVHYIGSRLGRTLTGWVQRTFQSTQAATASSRNSCAADDKATEPLPKDCPVSSYNEWDPLEEVIVGRAENACVPPFTIEVKANTYEKYWPFYQKQGGHYFPKDHLKKAVAEIEEMCNILKTEGVTVRRPDPIDWSLKYKTPDFESTGLYSAMPRDILIVVGNEIIEAPMAWRSRFFEYRAYRSIIKDYFHRGAKWTTAPKPTMADELYNQDYPIHSVEDRHKLAAQGKFVTTEFEPCFDAADFIRAGRDIFAQRSQVTNYLGIEWMRRHLAPDYRVHIISFKDPNPMHIDATFNIIGPGIVLSNPDRPCHQIDLFKKAGWTIITPPTPIIPDDHPLWMSSKWLSMNVLMLDEKRVMVDANEVPIQKMFEKLGITTIKVNIRNANSLGGGFHCWTCDVRRRGTLQSYLD.

The transit peptide at 1 to 43 (MLRVRCLRGGSRGAEAVHYIGSRLGRTLTGWVQRTFQSTQAAT) directs the protein to the mitochondrion. S46 and S49 each carry phosphoserine. D170 provides a ligand contact to arginine. Catalysis depends on residues D254 and H303. The arginine site is built by D305, R322, S354, and S355. K385 carries the post-translational modification N6-acetyllysine. Residue C407 is the Amidino-cysteine intermediate of the active site.

It belongs to the amidinotransferase family. In terms of assembly, homodimer. There is an equilibrium between the monomeric and dimeric forms, shifted towards the side of the monomer. As to expression, expressed in brain, heart, kidney, liver, lung, salivary gland and skeletal muscle tissue, with the highest expression in kidney. Biallelically expressed in placenta and fetal tissues.

Its subcellular location is the mitochondrion inner membrane. The protein localises to the cytoplasm. The enzyme catalyses L-arginine + glycine = guanidinoacetate + L-ornithine. It catalyses the reaction 4-aminobutanoate + L-arginine = 4-guanidinobutanoate + L-ornithine. The catalysed reaction is beta-alanine + L-arginine = 3-guanidinopropanoate + L-ornithine. It carries out the reaction taurine + L-arginine = taurocyamine + L-ornithine. Its pathway is amine and polyamine biosynthesis; creatine biosynthesis; creatine from L-arginine and glycine: step 1/2. Functionally, transamidinase that catalyzes the transfer of the amidino group of L-arginine onto the amino moiety of acceptor metabolites such as glycine, beta-alanine, gamma-aminobutyric acid (GABA) and taurine yielding the corresponding guanidine derivatives. Catalyzes the rate-limiting step of creatine biosynthesis, namely the transfer of the amidino group from L-arginine to glycine to generate guanidinoacetate, which is then methylated by GAMT to form creatine. Provides creatine as a source for ATP generation in tissues with high energy demands, in particular skeletal muscle, heart and brain. This chain is Glycine amidinotransferase, mitochondrial (GATM), found in Homo sapiens (Human).